Here is a 346-residue protein sequence, read N- to C-terminus: MKVMRTTVATVVAATLSMSAFSVFAEASLTGAGATFPAPVYAKWADTYQKETGNKVNYQGIGSSGGVKQIIANTVDFGASDAPLSDEKLAQEGLFQFPTVIGGVVLAVNIPGLKSGELVLDGKTLGDIYLGKIKKWDDEAIAKLNPGLKLPSQNIAVVRRADGSGTSFVFTSYLAKVNEEWKNNVGTGSTVKWPIGLGGKGNDGIAAFVQRLPGAIGYVEYAYAKQNNLAYTKLISADGKPVSPTEENFANAAKGADWSKTFAQDLTNQKGEDAWPITSTTFILIHKDQKKPEQGTEVLKFFDWAYKTGAKQANDLDYASLPDSVVEQVRAAWKTNIKDSSGKPLY.

The N-terminal stretch at 1–25 is a signal peptide; the sequence is MKVMRTTVATVVAATLSMSAFSVFA. Phosphate-binding positions include 34 to 36, serine 63, aspartate 81, and 164 to 166; these read ATF and SGT.

It belongs to the PstS family. In terms of assembly, the complex is composed of two ATP-binding proteins (PstB), two transmembrane proteins (PstC and PstA) and a solute-binding protein (PstS).

It localises to the periplasm. Functionally, part of the ABC transporter complex PstSACB involved in phosphate import. The polypeptide is Phosphate-binding protein PstS (pstS) (Escherichia coli (strain K12)).